The following is a 700-amino-acid chain: Non-hemolytic phospholipase C (700 aa).

The segment at residues 1 to 34 is a signal peptide (tat-type signal); that stretch reads MTNQNRRDFLRLAAGTAGAAALQLFPPVIREALA.

It belongs to the bacterial phospholipase C family. Post-translationally, predicted to be exported by the Tat system. The position of the signal peptide cleavage has not been experimentally proven.

It carries out the reaction a 1,2-diacyl-sn-glycero-3-phosphocholine + H2O = phosphocholine + a 1,2-diacyl-sn-glycerol + H(+). Functionally, hydrolyzes phosphatidylserine as well as phosphatidylcholine. The chain is Non-hemolytic phospholipase C (plcN) from Burkholderia pseudomallei (strain K96243).